The primary structure comprises 322 residues: Homoserine kinase (322 aa).

107–117 contributes to the ATP binding site; sequence PLSSGMGGSAA.

It belongs to the GHMP kinase family. Homoserine kinase subfamily.

The protein resides in the cytoplasm. The enzyme catalyses L-homoserine + ATP = O-phospho-L-homoserine + ADP + H(+). The protein operates within amino-acid biosynthesis; L-threonine biosynthesis; L-threonine from L-aspartate: step 4/5. Functionally, catalyzes the ATP-dependent phosphorylation of L-homoserine to L-homoserine phosphate. This chain is Homoserine kinase, found in Xylella fastidiosa (strain M23).